The chain runs to 295 residues: UDP-N-acetylenolpyruvoylglucosamine reductase (295 aa).

The region spanning 24-188 (KVGGNAEIFF…LKAIFKANKG (165 aa)) is the FAD-binding PCMH-type domain. The active site involves Arg168. Ser217 serves as the catalytic Proton donor. The active site involves Glu287.

Belongs to the MurB family. The cofactor is FAD.

The protein localises to the cytoplasm. It carries out the reaction UDP-N-acetyl-alpha-D-muramate + NADP(+) = UDP-N-acetyl-3-O-(1-carboxyvinyl)-alpha-D-glucosamine + NADPH + H(+). The protein operates within cell wall biogenesis; peptidoglycan biosynthesis. Its function is as follows. Cell wall formation. The polypeptide is UDP-N-acetylenolpyruvoylglucosamine reductase (Rickettsia typhi (strain ATCC VR-144 / Wilmington)).